The primary structure comprises 213 residues: Nucleoside triphosphate pyrophosphatase (213 aa).

The Proton acceptor role is filled by aspartate 77.

It belongs to the Maf family. A divalent metal cation serves as cofactor.

It localises to the cytoplasm. It catalyses the reaction a ribonucleoside 5'-triphosphate + H2O = a ribonucleoside 5'-phosphate + diphosphate + H(+). The catalysed reaction is a 2'-deoxyribonucleoside 5'-triphosphate + H2O = a 2'-deoxyribonucleoside 5'-phosphate + diphosphate + H(+). In terms of biological role, nucleoside triphosphate pyrophosphatase. May have a dual role in cell division arrest and in preventing the incorporation of modified nucleotides into cellular nucleic acids. The sequence is that of Nucleoside triphosphate pyrophosphatase from Cutibacterium acnes (strain DSM 16379 / KPA171202) (Propionibacterium acnes).